The primary structure comprises 443 residues: tRNA-2-methylthio-N(6)-dimethylallyladenosine synthase (443 aa).

Residues 12–126 (KTFRVKSFGC…LPEMVADAAA (115 aa)) enclose the MTTase N-terminal domain. The [4Fe-4S] cluster site is built by Cys-21, Cys-57, Cys-89, Cys-162, Cys-166, and Cys-169. Positions 148–380 (RKSAPTAFLT…QAALNRDQLA (233 aa)) constitute a Radical SAM core domain. The TRAM domain occupies 383–443 (KASVGKTCEV…GPNSISGRLA (61 aa)).

Belongs to the methylthiotransferase family. MiaB subfamily. In terms of assembly, monomer. It depends on [4Fe-4S] cluster as a cofactor.

It localises to the cytoplasm. The enzyme catalyses N(6)-dimethylallyladenosine(37) in tRNA + (sulfur carrier)-SH + AH2 + 2 S-adenosyl-L-methionine = 2-methylsulfanyl-N(6)-dimethylallyladenosine(37) in tRNA + (sulfur carrier)-H + 5'-deoxyadenosine + L-methionine + A + S-adenosyl-L-homocysteine + 2 H(+). Catalyzes the methylthiolation of N6-(dimethylallyl)adenosine (i(6)A), leading to the formation of 2-methylthio-N6-(dimethylallyl)adenosine (ms(2)i(6)A) at position 37 in tRNAs that read codons beginning with uridine. In Novosphingobium aromaticivorans (strain ATCC 700278 / DSM 12444 / CCUG 56034 / CIP 105152 / NBRC 16084 / F199), this protein is tRNA-2-methylthio-N(6)-dimethylallyladenosine synthase.